The chain runs to 123 residues: Fluoride-specific ion channel FluC 2 (123 aa).

2 consecutive transmembrane segments (helical) span residues 1–21 (MTMLWVCLAGGLGAVARFLLD) and 30–50 (VPVPLGTLVINVMGSLLLGLI). Positions 74 and 77 each coordinate Na(+). The chain crosses the membrane as a helical span at residues 99-119 (ALHCMGMAIAGVLAAILGLAL).

It belongs to the fluoride channel Fluc/FEX (TC 1.A.43) family.

The protein resides in the cell membrane. The catalysed reaction is fluoride(in) = fluoride(out). Na(+) is not transported, but it plays an essential structural role and its presence is essential for fluoride channel function. Fluoride-specific ion channel. Important for reducing fluoride concentration in the cell, thus reducing its toxicity. This Cutibacterium acnes (strain DSM 16379 / KPA171202) (Propionibacterium acnes) protein is Fluoride-specific ion channel FluC 2.